Reading from the N-terminus, the 118-residue chain is UPF0102 protein Lxx14785 (118 aa).

It belongs to the UPF0102 family.

The protein is UPF0102 protein Lxx14785 of Leifsonia xyli subsp. xyli (strain CTCB07).